A 461-amino-acid polypeptide reads, in one-letter code: uncharacterized protein (461 aa).

Positions 1–19 (MEKCSHESGRHSAENDGKY) are enriched in basic and acidic residues. The segment at 1–21 (MEKCSHESGRHSAENDGKYDI) is disordered.

Belongs to the CapA family.

Could be involved in the biosynthesis of a cell wall component. This is an uncharacterized protein from Sinorhizobium fredii (strain NBRC 101917 / NGR234).